A 178-amino-acid chain; its full sequence is Large ribosomal subunit protein uL6 (178 aa).

This sequence belongs to the universal ribosomal protein uL6 family. Part of the 50S ribosomal subunit.

This protein binds to the 23S rRNA, and is important in its secondary structure. It is located near the subunit interface in the base of the L7/L12 stalk, and near the tRNA binding site of the peptidyltransferase center. The protein is Large ribosomal subunit protein uL6 of Helicobacter pylori (strain P12).